The primary structure comprises 493 residues: NAD(P)H dehydrogenase (quinone) (493 aa).

FAD contacts are provided by residues 12–13 (PA), 35–37 (DCD), 42–43 (AA), Lys52, Gly117, Asp317, 324–325 (LA), and Tyr450.

It belongs to the class-I pyridine nucleotide-disulfide oxidoreductase family. In terms of assembly, homotetramer. FAD serves as cofactor.

It catalyses the reaction a quinone + NADH + H(+) = a quinol + NAD(+). The enzyme catalyses a quinone + NADPH + H(+) = a quinol + NADP(+). Its function is as follows. May contribute to virulence by increasing resistance to reactive oxygen intermediates. It can reduce 2,6-dimethyl-1,4-benzoquinone (DMBQ), 5-hydroxy-1,4-naphthaquinone (5-HNQ) and menadione. This is NAD(P)H dehydrogenase (quinone) (lpdA) from Mycobacterium tuberculosis (strain CDC 1551 / Oshkosh).